The sequence spans 255 residues: 1-acyl-sn-glycerol-3-phosphate acyltransferase (255 aa).

The HXXXXD motif motif lies at 78 to 83 (HVSWLD).

This sequence belongs to the 1-acyl-sn-glycerol-3-phosphate acyltransferase family.

The protein localises to the cell inner membrane. It carries out the reaction a 1-acyl-sn-glycero-3-phosphate + an acyl-CoA = a 1,2-diacyl-sn-glycero-3-phosphate + CoA. It participates in phospholipid metabolism; CDP-diacylglycerol biosynthesis; CDP-diacylglycerol from sn-glycerol 3-phosphate: step 2/3. Its function is as follows. Converts lysophosphatidic acid (LPA) into phosphatidic acid by incorporating acyl moiety at the 2 position. This chain is 1-acyl-sn-glycerol-3-phosphate acyltransferase (plsC), found in Neisseria gonorrhoeae.